Reading from the N-terminus, the 44-residue chain is Diuretic hormone (44 aa).

Residue Val44 is modified to Valine amide.

The protein resides in the secreted. Its function is as follows. Regulation of fluid secretion. Stimulates primary urine secretion by Malpighian tubules and causes a dose-dependent stimulation of cAMP levels in the tubules. May act as clearance peptide in that it may remove metabolic waste from the hemolymph. The chain is Diuretic hormone from Stomoxys calcitrans (Stable fly).